Here is a 356-residue protein sequence, read N- to C-terminus: NADH-quinone oxidoreductase subunit H (356 aa).

8 helical membrane-spanning segments follow: residues 18-38 (IVMI…IAYI), 87-107 (GVFL…WAVI), 120-140 (VGIL…IMAG), 166-186 (IGFV…SAVV), 205-225 (ILNW…VSAL), 265-285 (AITT…LPPI), 292-312 (WVPG…LIAM), and 333-353 (FLPL…FAGI).

The protein belongs to the complex I subunit 1 family. NDH-1 is composed of 14 different subunits. Subunits NuoA, H, J, K, L, M, N constitute the membrane sector of the complex.

The protein localises to the cell inner membrane. It catalyses the reaction a quinone + NADH + 5 H(+)(in) = a quinol + NAD(+) + 4 H(+)(out). In terms of biological role, NDH-1 shuttles electrons from NADH, via FMN and iron-sulfur (Fe-S) centers, to quinones in the respiratory chain. The immediate electron acceptor for the enzyme in this species is believed to be ubiquinone. Couples the redox reaction to proton translocation (for every two electrons transferred, four hydrogen ions are translocated across the cytoplasmic membrane), and thus conserves the redox energy in a proton gradient. This subunit may bind ubiquinone. The protein is NADH-quinone oxidoreductase subunit H of Bradyrhizobium sp. (strain BTAi1 / ATCC BAA-1182).